The chain runs to 484 residues: Pentatricopeptide repeat-containing protein At1g09190 (484 aa).

PPR repeat units lie at residues 66–100 (NVLVFNAMIKCYSLVGPPLESLSFFSSMKSRGIWA), 101–135 (DEYTYAPLLKSCSSLSDLRFGKCVHGELIRTGFHR), 136–166 (LGKIRIGVVELYTSGGRMGDAQKVFDEMSER), 167–197 (NVVVWNLMIRGFCDSGDVERGLHLFKQMSER), 198–232 (SIVSWNSMISSLSKCGRDREALELFCEMIDQGFDP), 233–267 (DEATVVTVLPISASLGVLDTGKWIHSTAESSGLFK), 269–299 (FITVGNALVDFYCKSGDLEAATAIFRKMQRR), 300–334 (NVVSWNTLISGSAVNGKGEFGIDLFDAMIEEGKVA), 336–366 (NEATFLGVLACCSYTGQVERGEELFGLMMER), and 372–406 (RTEHYGAMVDLMSRSGRITEAFKFLKNMPVNANAA). The segment at 407-482 (MWGSLLSACR…STGQSTICDV (76 aa)) is type E motif.

It belongs to the PPR family. PCMP-E subfamily.

This chain is Pentatricopeptide repeat-containing protein At1g09190 (PCMP-E70), found in Arabidopsis thaliana (Mouse-ear cress).